Consider the following 316-residue polypeptide: N-acetyl-gamma-glutamyl-phosphate reductase (316 aa).

Cys136 is an active-site residue.

The protein belongs to the NAGSA dehydrogenase family. Type 1 subfamily.

Its subcellular location is the cytoplasm. It carries out the reaction N-acetyl-L-glutamate 5-semialdehyde + phosphate + NADP(+) = N-acetyl-L-glutamyl 5-phosphate + NADPH + H(+). The protein operates within amino-acid biosynthesis; L-arginine biosynthesis; N(2)-acetyl-L-ornithine from L-glutamate: step 3/4. Functionally, catalyzes the NADPH-dependent reduction of N-acetyl-5-glutamyl phosphate to yield N-acetyl-L-glutamate 5-semialdehyde. In Xanthomonas campestris pv. campestris (strain B100), this protein is N-acetyl-gamma-glutamyl-phosphate reductase.